A 289-amino-acid chain; its full sequence is Formamidopyrimidine-DNA glycosylase (289 aa).

P2 functions as the Schiff-base intermediate with DNA in the catalytic mechanism. The Proton donor role is filled by E3. Residue K60 is the Proton donor; for beta-elimination activity of the active site. DNA contacts are provided by H94, R126, and R167. An FPG-type zinc finger spans residues 252-287; the sequence is QVYGKPAGTPCPRCGTGLARIRIAGRSSVFCPRCQP. R277 acts as the Proton donor; for delta-elimination activity in catalysis.

The protein belongs to the FPG family. Monomer. Zn(2+) serves as cofactor.

The enzyme catalyses Hydrolysis of DNA containing ring-opened 7-methylguanine residues, releasing 2,6-diamino-4-hydroxy-5-(N-methyl)formamidopyrimidine.. It catalyses the reaction 2'-deoxyribonucleotide-(2'-deoxyribose 5'-phosphate)-2'-deoxyribonucleotide-DNA = a 3'-end 2'-deoxyribonucleotide-(2,3-dehydro-2,3-deoxyribose 5'-phosphate)-DNA + a 5'-end 5'-phospho-2'-deoxyribonucleoside-DNA + H(+). In terms of biological role, involved in base excision repair of DNA damaged by oxidation or by mutagenic agents. Acts as a DNA glycosylase that recognizes and removes damaged bases. Has a preference for oxidized purines, such as 7,8-dihydro-8-oxoguanine (8-oxoG). Has AP (apurinic/apyrimidinic) lyase activity and introduces nicks in the DNA strand. Cleaves the DNA backbone by beta-delta elimination to generate a single-strand break at the site of the removed base with both 3'- and 5'-phosphates. The sequence is that of Formamidopyrimidine-DNA glycosylase from Thermomicrobium roseum (strain ATCC 27502 / DSM 5159 / P-2).